We begin with the raw amino-acid sequence, 882 residues long: MAYRKRGARRETNLKQDERMQEKEDSKNINNDSPKSQLSEKVLSKKEEIITDNQEEVKISDEVKKSNKEESKQLLEVLKTKEEHQKEVQYEILQKTIPTFEPKESILKKLEDIKPEQAKKQTKLFRIFEPKQLPIYRANGERELRNRWYWKLKRDTLPDGDYDVREYFLNLYDQVLMEMPDYLLLKDMAVENKNSRDAGKVVDSETAAICDAIFQDEETEGAVRRFIAEMRQRVQADRNVVNYPSILHPIDHAFNGYFLQHQLVEPLNNDIIFNYIPERIRNDVNYILNMDRNLPSTARYIRPNLLQDRLNLHDNFESLWDTITTSNYILARSVVPDLKELVSTEAQIQKMSQDLQLEALTIQSETQFLTGINSQAANDCFKTLIAAMLSQRTMSLDFVTTNYMSLISGMWLLTVIPNDMFIRESLVACQLAIINTIVYPAFGMQRMHYRNGDPQTPFQIAEQQIQNFQVANWLHFVNYNQFRQVVIDGVLNQVLNDNIRNGHVVNQLMEALMQLSRQQFPTMPVDYKRSIQRGILLLSNRLGQLVDLTRLLSYNYETLMACITMNMQHVQTLTTEKLQLTSVTSLCMLIGNATVIPSPQTLFHYYNVNVNFHSNYNERINDAVAIITAANRLNLYQKKMKSIVEDFLKRLQIFDVARVPDDQMYRLRDRLRLLPVEIRRLDIFNLIAMNMEQIERASDKIAQGVIIAYRDMQLERDEMYGYVNIARNLDGFQQINLEELMRSGDYAQITNMLLNNQPVALVGALPFITDSSVISLIAKLDATVFAQIVKLRKVDTLKPILYKINSDSNDFYLVANYDWIPTSTTKVYKQVPQQFDFRASMHMLTSNLTFTVYSDLLAFVSADTVEPINAVAFDNMRIMNEL.

A disordered region spans residues 1-45 (MAYRKRGARRETNLKQDERMQEKEDSKNINNDSPKSQLSEKVLSK). Positions 1 to 82 (MAYRKRGARR…QLLEVLKTKE (82 aa)) are 5-fold hub; involved in the encapsidation of VP1 and VP3. Over residues 9–27 (RRETNLKQDERMQEKEDSK) the composition is skewed to basic and acidic residues. Over residues 28-39 (NINNDSPKSQLS) the composition is skewed to polar residues. 2 hydrophobic regions span residues 396 to 416 (LDFV…LTVI) and 424 to 444 (ESLV…AFGM).

Belongs to the rotavirus VP2 family. As to quaternary structure, homodecamer; each decamer is made up of two conformers of VP2, called VP2A and VP2B. Interacts with a VP1-VP3 complex. Interacts with the intermediate capsid protein VP6. Interacts with NSP5. Interacts (via N-terminus) with NSP2. Post-translationally, sumoylated with SUMO1 and SUMO2. Sumoylation of viral proteins seems to have a positive role on viral replication.

The protein resides in the virion. In terms of biological role, inner capsid protein that self-assembles to form an icosahedral capsid with a T=2 symmetry, which consists of 120 copies of VP2, with channels at each of its five-fold vertices. This capsid constitutes the innermost concentric layer of the viral mature particle. It encapsidates the polymerase VP1, the capping enzyme VP3 and the genomic dsRNA, thereby defining the core. The innermost VP2 capsid and the intermediate VP6 capsid remain intact following cell entry to protect the dsRNA from degradation and to prevent unfavorable antiviral responses in the host cell during all the replication cycle of the virus. Nascent transcripts are transcribed within the structural confines of this double-layered particle (DLP) and are extruded through the channels formed by VP2 N-termini. VP2 is required for the replicase activity of VP1 polymerase. Probably recruits a copy of a VP1-VP3 complex, potentially along with a segment of plus-strand RNA, as a decamer of VP2 assembles. May activate the autoinhibited VP1/RNA complex to coordinate packaging and genome replication. The sequence is that of Inner capsid protein VP2 from Macaca mulatta (Rhesus macaque).